We begin with the raw amino-acid sequence, 243 residues long: UPF0246 protein SpyM3_1790 (243 aa).

It belongs to the UPF0246 family.

This chain is UPF0246 protein SpyM3_1790, found in Streptococcus pyogenes serotype M3 (strain ATCC BAA-595 / MGAS315).